The sequence spans 87 residues: Small ribosomal subunit protein uS17 (87 aa).

The protein belongs to the universal ribosomal protein uS17 family. In terms of assembly, part of the 30S ribosomal subunit.

In terms of biological role, one of the primary rRNA binding proteins, it binds specifically to the 5'-end of 16S ribosomal RNA. This is Small ribosomal subunit protein uS17 from Syntrophobacter fumaroxidans (strain DSM 10017 / MPOB).